Reading from the N-terminus, the 378-residue chain is SWI/SNF-related matrix-associated actin-dependent regulator of chromatin subfamily B member 1 (378 aa).

Positions methionine 1–serine 106 are DNA-binding.

This sequence belongs to the SNF5 family. Component of the multiprotein chromatin-remodeling complexes SWI/SNF. Component of neural progenitors-specific chromatin remodeling complex (npBAF complex) and the neuron-specific chromatin remodeling complex (nBAF complex). Component of the BAF (SWI/SNF) chromatin remodeling complex. Component of the SWI/SNF-B (PBAF) chromatin remodeling complex. Binds to double-stranded DNA.

The protein resides in the nucleus. Involved in chromatin-remodeling. Core component of the BAF (SWI/SNF) complex. This ATP-dependent chromatin-remodeling complex plays important roles in cell proliferation and differentiation, in cellular antiviral activities and inhibition of tumor formation. Belongs to the neural progenitors-specific chromatin remodeling complex (npBAF complex) and the neuron-specific chromatin remodeling complex (nBAF complex) and may play a role in neural development. The chain is SWI/SNF-related matrix-associated actin-dependent regulator of chromatin subfamily B member 1 (smarcb1) from Xenopus tropicalis (Western clawed frog).